The following is a 217-amino-acid chain: uncharacterized protein (217 aa).

Residues 14–217 (LAVNNLCIER…NELATEIISL (204 aa)) form the ABC transporter domain. 46–53 (GEIGSGKT) provides a ligand contact to ATP.

It belongs to the ABC transporter superfamily.

This is an uncharacterized protein from Haemophilus influenzae (strain ATCC 51907 / DSM 11121 / KW20 / Rd).